Consider the following 739-residue polypeptide: Adenosylcobalamin-dependent ribonucleoside-triphosphate reductase (739 aa).

Cysteines 119 and 419 form a disulfide. Residues 147–158 (SMPFSFLFDELM) form an effector region-1 region. Residues 168-313 (ARSNISQIPR…ICNLIGKAVV (146 aa)) form an effector region-2 region. Active-site residues include C408 and E410. The adenosylcobalamin-binding-1 stretch occupies residues 565–626 (FHYGAYLIQR…NPNFASAGTV (62 aa)). The adenosylcobalamin-binding-2 stretch occupies residues 685–724 (LQQAPKEPIDKETYEKRSQEITGNVEEVFSQLNSDVKDLE).

This sequence belongs to the class II ribonucleoside-triphosphate reductase family. In terms of assembly, monomer. The cofactor is adenosylcob(III)alamin.

It catalyses the reaction a 2'-deoxyribonucleoside 5'-triphosphate + [thioredoxin]-disulfide + H2O = a ribonucleoside 5'-triphosphate + [thioredoxin]-dithiol. Its activity is regulated as follows. Allosterically regulated by ATP and dNTP. The polypeptide is Adenosylcobalamin-dependent ribonucleoside-triphosphate reductase (rtpR) (Lactobacillus delbrueckii subsp. bulgaricus (strain ATCC 11842 / DSM 20081 / BCRC 10696 / JCM 1002 / NBRC 13953 / NCIMB 11778 / NCTC 12712 / WDCM 00102 / Lb 14)).